The sequence spans 935 residues: Disintegrin and metalloproteinase domain-containing protein 22 (935 aa).

A signal peptide spans 1 to 24; it reads MHINGGPLASWICCVIGSIHLAHA. The propeptide occupies 25–227; sequence STRPENGGTS…QQTRSQRKKR (203 aa). Residues N167 and N210 are each glycosylated (N-linked (GlcNAc...) asparagine). The Extracellular segment spans residues 228 to 736; that stretch reads QTRRYPRNVE…NRDEGVISTN (509 aa). Residues 241–440 form the Peptidase M12B domain; that stretch reads KYVELMIVND…GGGACLFNKP (200 aa). 17 cysteine pairs are disulfide-bonded: C351/C435, C394/C419, C396/C403, C449/C479, C460/C476, C462/C468, C475/C496, C487/C493, C492/C518, C505/C525, C512/C544, C537/C549, C556/C607, C571/C637, C585/C595, C602/C665, and C659/C670. Positions 446-533 constitute a Disintegrin domain; sequence PPECGNGFVE…QCPANIHKLD (88 aa). N-linked (GlcNAc...) asparagine glycosylation occurs at N521. N-linked (GlcNAc...) asparagine glycans are attached at residues N609 and N636. N-linked (GlcNAc...) asparagine glycosylation is present at N677. Positions 677–713 constitute an EGF-like domain; the sequence is NFSTCLGSTNKICSGHGVCSNEVRCICDRFWTGEDCS. Disulfide bonds link C681–C695, C689–C701, and C703–C712. Residues 737–757 traverse the membrane as a helical segment; sequence IIIGAIAGTILVLALVLGITA. Residues 758-935 are Cytoplasmic-facing; sequence WGYKNYRRER…QSARLWETSI (178 aa). A disordered region spans residues 850-935; sequence VSDVCENGRP…QSARLWETSI (86 aa). The segment covering 859–870 has biased composition (polar residues); it reads PRSNSWQGNVTS. Over residues 871 to 882 the composition is skewed to basic residues; sequence SRKKLRGKRFRP. The segment covering 891-906 has biased composition (low complexity); the sequence is SPAKSPSSSTGSIASS.

Post-translationally, the precursor is cleaved by a furin endopeptidase. In terms of tissue distribution, low levels in adult tissues. Not detected in developing embryos.

Its subcellular location is the cell membrane. Probable ligand for integrin in the brain. This is a non catalytic metalloprotease-like protein. In Xenopus laevis (African clawed frog), this protein is Disintegrin and metalloproteinase domain-containing protein 22 (adam22).